Reading from the N-terminus, the 1061-residue chain is MNKLDYPRRNGTHKVRITILCARNLARKDLFRLPDPFAKVQVDGTGQVYSTEISKSSLDPKWNAHYDLFLGIGDAITITVWNQRKIHKGSGFLGCVRIPAFNIQSLKGAGFQRLDLGKLSPDDDELVRGQIIISLLSKDGPSSGNPLAIVGPSGDVRGPSEDDSSEDSLPEGWEERRTDNGRVYYVNHATKSTQWDRPRQPGVVGSSHATSPQQRHNTHNGNSGDRQAPAGPTRSTTCTNLMNNGHRSRDLSVTASDERRHSTEILSSVGKENTSPTTPVSATTTPGKKTSSSNSSSAGGRTLEQRPTNEPATPTSSTTSASVRLHSNDNHVKTPKHQTNGHAPPESTPTSPTGQQNYVNGNAQNGSTSGNGSGQAAQPQSASNGWTQEDAATTTSPSTTTSPPRHSQSPPTPNISPPASVTPSANGNVHSPNANSTPAGSGGGSRSYTAATPGQRSQRRSSRQQGEESSTRRRSSRGTRNGGTSGGGGGGGSGQRYASAAIAAANQAARPFLDLPPGYEMRTTQQGQVYFYHIPTGVSTWHDPRIPRDFDTQHLTLDAIGPLPSGWEQRKTASGRVYFVDHNNRTTQFTDPRLSGSILQMIRRGTVPPTSAANAGTPAPPSATPATPSAAAAVPPQATPASNATPTTLTTTTNPPHRIVPDLPQGLLEGADLLPKYRRDLVGKLRALRTELQTMQPQSGHCRLEVSRNEIFEESYRLIMKMRAKDMRKRLMVKFKGEEGLDYGGVAREWLHLLSREMLNPQYGLFQYSRDDHYTLQINPDSGVNPDHLSYFHFVGRTLGIAVFHGHCLDGGFTTPFYKQLLNKPITLGDIEGVDPDLHRSLTWMLESNISGIIESTFSVENNSFGALVVHELKPGGASIPVTEENKREYVKLYVNYRFMRGIEQQFLALQKGFCELIPSHLLRPFDERELELVIGGISSIDVNDWRNNTRLKHCTNETTQVLWFWQVVESYSSEMRARLLQFVTGSSRVPLQGFRALQGSTGAVGPRLFTIHLTADVPTQNLPKAHTCFNRIDLPPYETYQLLCDKLTQAVEETCGFAVE.

The 116-residue stretch at 1 to 116 folds into the C2 domain; that stretch reads MNKLDYPRRN…KGAGFQRLDL (116 aa). 2 disordered regions span residues 143–176 and 188–496; these read SGNPLAIVGPSGDVRGPSEDDSSEDSLPEGWEER and HATK…SGQR. The WW 1 domain maps to 167-200; it reads DSLPEGWEERRTDNGRVYYVNHATKSTQWDRPRQ. Composition is skewed to polar residues over residues 207–225 and 233–255; these read SHATSPQQRHNTHNGNSGD and TRSTTCTNLMNNGHRSRDLSVTA. Serine 262 carries the phosphoserine modification. The span at 264 to 273 shows a compositional bias: polar residues; that stretch reads EILSSVGKEN. Composition is skewed to low complexity over residues 274–300 and 311–322; these read TSPTTPVSATTTPGKKTSSSNSSSAGG and PATPTSSTTSAS. Polar residues predominate over residues 348-359; sequence TPTSPTGQQNYV. Low complexity predominate over residues 360–378; it reads NGNAQNGSTSGNGSGQAAQ. Over residues 379–392 the composition is skewed to polar residues; that stretch reads PQSASNGWTQEDAA. The segment covering 393-409 has biased composition (low complexity); the sequence is TTTSPSTTTSPPRHSQS. A Phosphothreonine modification is found at threonine 412. Serine 416 carries the post-translational modification Phosphoserine. The segment covering 417–439 has biased composition (polar residues); sequence PPASVTPSANGNVHSPNANSTPA. Residues 480–494 show a composition bias toward gly residues; the sequence is RNGGTSGGGGGGGSG. WW domains are found at residues 513 to 546 and 561 to 594; these read LDLPPGYEMRTTQQGQVYFYHIPTGVSTWHDPRI and GPLPSGWEQRKTASGRVYFVDHNNRTTQFTDPRL. The interval 513–602 is interaction with MAD; that stretch reads LDLPPGYEMR…RLSGSILQMI (90 aa). Low complexity-rich tracts occupy residues 608–617 and 624–656; these read PPTSAANAGT and TPATPSAAAAVPPQATPASNATPTTLTTTTNPP. The interval 608–661 is disordered; sequence PPTSAANAGTPAPPSATPATPSAAAAVPPQATPASNATPTTLTTTTNPPHRIVP. The region spanning 723-1061 is the HECT domain; that stretch reads RAKDMRKRLM…VEETCGFAVE (339 aa). The active-site Glycyl thioester intermediate is cysteine 1029.

In terms of assembly, interacts with phosphorylated MAD.

It catalyses the reaction S-ubiquitinyl-[E2 ubiquitin-conjugating enzyme]-L-cysteine + [acceptor protein]-L-lysine = [E2 ubiquitin-conjugating enzyme]-L-cysteine + N(6)-ubiquitinyl-[acceptor protein]-L-lysine.. Its pathway is protein modification; protein ubiquitination. E3 ubiquitin-protein ligase which accepts ubiquitin from an E2 ubiquitin-conjugating enzyme in the form of a thioester and then directly transfers the ubiquitin to targeted substrates. Down-regulates Dpp signaling after gastrulation by promoting MAD ubiquitination and subsequent degradation. The protein is E3 ubiquitin-protein ligase Smurf1 of Drosophila melanogaster (Fruit fly).